We begin with the raw amino-acid sequence, 248 residues long: MEIKTPSFRVETLDKSKTYHHHEYPQIILGLMGKSELSIEDSSVCLSPGMGYRINANVEHSFSGTSNNQVLVMNLPPFISMTDVEQFGNSYFSLDARTHQLISLLATELKEHADDSLLSQSISNTLQCLIKRSLMLFDEKKVERLNMVLIDNYIEQHLQKKISVAELSSVAFLAQSQFYALFKSQMGITPHQYVLRKRLDLAKQLIAERQKPLSQVAQLCGFSSQSSFSQAFRRLYGMSPTRYQFFIR.

The HTH araC/xylS-type domain occupies 148-246; it reads VLIDNYIEQH…GMSPTRYQFF (99 aa). 2 consecutive DNA-binding regions (H-T-H motif) follow at residues 165 to 186 and 213 to 236; these read AELSSVAFLAQSQFYALFKSQM and LSQVAQLCGFSSQSSFSQAFRRLY.

Probable transcriptional regulator. Its target gene(s) is not yet known. This Photobacterium leiognathi protein is Probable transcriptional regulator LumQ (lumQ).